Reading from the N-terminus, the 200-residue chain is Transgelin (200 aa).

Alanine 2 bears the N-acetylalanine mark. One can recognise a Calponin-homology (CH) domain in the interval 24–137; that stretch reads DELEDRLVEW…RTLVALGSLA (114 aa). The stretch at 175-199 is one Calponin-like repeat; it reads IGLQMGTNKGASQAGMSYGRPRQII.

This sequence belongs to the calponin family. In terms of assembly, monomer. As to expression, gizzard, uterus, intestine, esophagus, aorta, and trace amounts in brain, liver and heart.

It is found in the cytoplasm. In terms of biological role, actin cross-linking/gelling protein. This chain is Transgelin (TAGLN), found in Gallus gallus (Chicken).